Consider the following 367-residue polypeptide: Molybdopterin synthase catalytic subunit (367 aa).

Substrate-binding positions include 101–102, lysine 117, and 124–126; these read HR and KKE.

It belongs to the MoaE family. MOCS2B subfamily. In terms of assembly, heterotetramer; composed of 2 small (Mocs2A) and 2 large (Mocs2B) subunits.

Its subcellular location is the cytoplasm. The catalysed reaction is 2 [molybdopterin-synthase sulfur-carrier protein]-C-terminal-Gly-aminoethanethioate + cyclic pyranopterin phosphate + H2O = molybdopterin + 2 [molybdopterin-synthase sulfur-carrier protein]-C-terminal Gly-Gly + 2 H(+). It participates in cofactor biosynthesis; molybdopterin biosynthesis. Its function is as follows. Catalytic subunit of the molybdopterin synthase complex, a complex that catalyzes the conversion of precursor Z into molybdopterin. Acts by mediating the incorporation of 2 sulfur atoms from thiocarboxylated Mocs2A into precursor Z to generate a dithiolene group. This Drosophila erecta (Fruit fly) protein is Molybdopterin synthase catalytic subunit.